The chain runs to 223 residues: UPF0441 protein YgiB (223 aa).

Over residues 178 to 195 (TVPKTAMAPKPATTTTVT) the composition is skewed to low complexity. The disordered stretch occupies residues 178–223 (TVPKTAMAPKPATTTTVTRGGFGESVAKQSTMQRSAAGTSTRSMGG). Residues 204 to 223 (AKQSTMQRSAAGTSTRSMGG) are compositionally biased toward polar residues.

The protein belongs to the UPF0441 family.

In Salmonella enteritidis PT4 (strain P125109), this protein is UPF0441 protein YgiB.